A 214-amino-acid chain; its full sequence is Nicotinamidase (214 aa).

The Proton acceptor role is filled by Asp-18. Residues Asp-56, His-58, His-62, and His-91 each contribute to the a divalent metal cation site. Lys-116 is a catalytic residue. Catalysis depends on Cys-161, which acts as the Nucleophile.

This sequence belongs to the isochorismatase family. The cofactor is a divalent metal cation.

It carries out the reaction nicotinamide + H2O = nicotinate + NH4(+). It functions in the pathway cofactor biosynthesis; nicotinate biosynthesis; nicotinate from nicotinamide: step 1/1. Its function is as follows. Catalyzes the deamidation of nicotinamide (NAM) into nicotinate (Na). Functions in the deamidating salvage pathway for production of NAD from nicotinamide. This chain is Nicotinamidase, found in Acinetobacter baylyi (strain ATCC 33305 / BD413 / ADP1).